A 1198-amino-acid polypeptide reads, in one-letter code: Potassium/sodium hyperpolarization-activated cyclic nucleotide-gated channel 4 (1198 aa).

Over 1-266 (MDKLPPSMRK…PYSDFRFYWD (266 aa)) the chain is Cytoplasmic. The segment at 25–183 (IMDEEEDGEE…PASASCEQPS (159 aa)) is disordered. Residues 26–36 (MDEEEDGEEEG) show a composition bias toward acidic residues. Residues 105–118 (SRGGGSGGAGGGSS) are compositionally biased toward gly residues. A compositionally biased stretch (basic and acidic residues) spans 121–132 (HLHDSAEERRLI). Ser139 is subject to Phosphoserine. Positions 164-174 (ASPPPQQPPQP) are enriched in pro residues. The involved in subunit assembly stretch occupies residues 209–260 (GQSGFMQRQFGAMLQPGVNKFSLRMFGSQKAVEREQERVKSAGFWIIHPYSD). A helical membrane pass occupies residues 267-287 (LTMLLLMVGNLIIIPVGITFF). The Extracellular segment spans residues 288–293 (KDENTT). The chain crosses the membrane as a helical span at residues 294 to 314 (PWIVFNVVSDTFFLIDLVLNF). The Cytoplasmic portion of the chain corresponds to 315-340 (RTGIVVEDNTEIILDPQRIKMKYLKS). Residues 341 to 361 (WFVVDFISSIPVDYIFLIVET) traverse the membrane as a helical segment. Over 362–368 (RIDSEVY) the chain is Extracellular. A helical; Voltage-sensor transmembrane segment spans residues 369 to 389 (KTARALRIVRFTKILSLLRLL). Over 390–420 (RLSRLIRYIHQWEEIFHMTYDLASAVVRIVN) the chain is Cytoplasmic. The helical transmembrane segment at 421-441 (LIGMMLLLCHWDGCLQFLVPM) threads the bilayer. Residues 442 to 464 (LQDFPHDCWVSINGMVNNSWGKQ) are Extracellular-facing. An N-linked (GlcNAc...) asparagine glycan is attached at Asn458. Positions 465–486 (YSYALFKAMSHMLCIGYGRQAP) form an intramembrane region, pore-forming. Residues 487-496 (VGMSDVWLTM) lie on the Extracellular side of the membrane. The chain crosses the membrane as a helical span at residues 497–517 (LSMIVGATCYAMFIGHATALI). The Cytoplasmic portion of the chain corresponds to 518–1198 (QSLDSSRRQY…PVRSKLPSNL (681 aa)). 3',5'-cyclic GMP contacts are provided by Tyr559, Lys562, Phe564, and Glu566. Positions 659, 660, 662, 669, 670, 673, and 710 each coordinate 3',5'-cyclic AMP. Residues 804-1198 (AIFRPPPGPG…PVRSKLPSNL (395 aa)) form a disordered region. Composition is skewed to low complexity over residues 831–856 (SLIP…SSSS) and 866–880 (SAPP…SSSS). The span at 881–894 (SPPPGACSSPPAPT) shows a compositional bias: pro residues. 3 stretches are compositionally biased toward low complexity: residues 895-905 (PSTSTAATTTG), 913-937 (LGGS…SPQA), and 965-985 (RSPS…SPGL). Positions 1027 to 1040 (GHSPGPPRTFPSAP) are enriched in pro residues. Residues 1043 to 1054 (ASGSHGSLLLPP) are compositionally biased toward low complexity. Phosphoserine is present on residues Ser1103 and Ser1106. A compositionally biased stretch (gly residues) spans 1120-1132 (AGGGSGSSGGLGP).

It belongs to the potassium channel HCN family. As to quaternary structure, homotetramer. The potassium channel is composed of a homo- or heterotetrameric complex of pore-forming subunits. Interacts with PEX5L with a 4:4 HCN4:PEX5L stoichiometry; reduces the effects of cAMP on the voltage-dependence and rate of activation. Interacts with IRAG1; regulates HCN4 channel activity. Interacts with IRAG2; regulates HCN4 channel activity. Post-translationally, S-palmitoylated. In terms of tissue distribution, highly expressed in pyramidal and granule layer of the hippocampus, in thalamus anterior nucleus, in the supraoptic nucleus in hypothalamus, in cerebellum, and in trapezoid nuclei and superior olivary complex in the auditory system. Detected in a subset of elongated cells in taste buds.

It localises to the cell membrane. The enzyme catalyses K(+)(in) = K(+)(out). It catalyses the reaction Na(+)(in) = Na(+)(out). Activated by cAMP and at 100 times higher concentrationsand to a lesser extent by cGMP and cCMP. cAMP binding causes a conformation change that leads to the assembly of an active tetramer and channel opening. Binding of cAMP removes a tonic inhibition conferred by cyclic nucleotide-binding domain (CNBD) on channel opening. Cyclic dinucleotides can modulate HCN4 channel; cyclic dinucleotides acting as potent antagonists of cAMP. Inhibited by extracellular Cs(+) ions. Auxiliary subunits can also regulate HCN4 channel. IRAG1 causes a gain-of-function by shifting HCN4 activation to more depolarized membrane potentials in the absence of cAMP. In contrast, IRAG2 causes a loss-of-function by inhibiting cAMP-dependent potentiation of HCN4 activation. Functionally, hyperpolarization-activated ion channel that are permeable to Na(+) and K(+) ions with very slow activation and inactivation. Exhibits higher selectivity for K(+) over Na(+) ions. Contributes to the native pacemaker currents in heart (If) that regulate the rhythm of heart beat. Contributes to the native pacemaker currents in neurons (Ih). May mediate responses to sour stimuli. The chain is Potassium/sodium hyperpolarization-activated cyclic nucleotide-gated channel 4 (Hcn4) from Rattus norvegicus (Rat).